The sequence spans 155 residues: Phosphopantetheine adenylyltransferase (155 aa).

This sequence belongs to the eukaryotic CoaD family.

It is found in the cytoplasm. It catalyses the reaction (R)-4'-phosphopantetheine + ATP + H(+) = 3'-dephospho-CoA + diphosphate. The protein operates within cofactor biosynthesis; coenzyme A biosynthesis. Reversibly transfers an adenylyl group from ATP to 4'-phosphopantetheine, yielding dephospho-CoA (dPCoA) and pyrophosphate. The chain is Phosphopantetheine adenylyltransferase from Pyrobaculum aerophilum (strain ATCC 51768 / DSM 7523 / JCM 9630 / CIP 104966 / NBRC 100827 / IM2).